The sequence spans 308 residues: E3 ubiquitin-protein ligase RING2 (308 aa).

The residue at position 2 (Ser-2) is an N-acetylserine. Residues 2-179 (SQAVQTNGTQ…AEDNGDSSHC (178 aa)) form an interaction with HIP2 region. Residue Ser-41 is modified to Phosphoserine. Residues 51–91 (CPICLDMLKNTMTTKECLHRFCADCIITALRSGNKECPTCR) form an RING-type zinc finger. Positions 93–98 (KLVSKR) are interaction with nucleosomes via an acidic patch on histone H2A and histone H2B. A Glycyl lysine isopeptide (Lys-Gly) (interchain with G-Cter in ubiquitin) cross-link involves residue Lys-112. 2 positions are modified to phosphoserine: Ser-143 and Ser-168. Residues 157-206 (QRGKKQQIENGSGAEDNGDSSHCSNASTHSNQEAGPSNKRTKTSDDSGLE) form a disordered region. The segment covering 176 to 191 (SSHCSNASTHSNQEAG) has biased composition (polar residues). Residue Lys-249 forms a Glycyl lysine isopeptide (Lys-Gly) (interchain with G-Cter in SUMO2) linkage.

As to quaternary structure, component of chromatin-associated Polycomb (PcG) complexes. Component of a number of PRC1-like complexes; these complexes contain either the polycomb group ring finger protein PCGF1, or PCGF2, or PCGF3, or BMI1, or PCGF5, or PCGF6. Distinct PRC1-like complexes are composed of a RING1 subunit (RING1B or RING1A), one of the six PCGF proteins (PCGF1, PCGF2, PCGF3, BMI1, PCGF5 or PCGF6), one PHC protein (PHC1, PHC2 or PHC3) and one of the CBX proteins (CBX2, CBX4, CBX6, CBX7 or CBX8). Part of a complex that contains RNF2, UB2D3 and BMI1; within that complex RNF2 and BMI1 form a tight heterodimer, where UB2D3 interacts only with RNF2. The complex composed of RNF2, UB2D3 and BMI1 binds nucleosomes, and has activity only with nucleosomal histone H2A. Part of a complex that contains PCGF5, RNF2 and UBE2D3. Part of a complex that contains AUTS2, PCGF5, RNF2, CSNK2B and RYBP. Interacts with CBX6 and CBX8. Interacts with PHC1, PCGF2, RYBP, CBX7, CBX4, CBX2, RNF1/RING1, BMI1 and PHC2. Interaction with RYBP and CBX7 is mutually exclusive; both compete for the same binding site on RNF2. Component of repressive BCOR complex containing a Polycomb group subcomplex at least composed of RYBP, PCGF1, BCOR and RING1. Interacts with CBX2 and PHC1. Interacts with CHTOP. Interacts with AURKB. Part of the E2F6.com-1 complex in G0 phase composed of E2F6, MGA, MAX, TFDP1, CBX3, BAT8, EUHMTASE1, RNF1/RING1, RNF2/RING2, MBLR, L3MBTL2 and YAF2. Component of some MLL1/MLL complex, at least composed of the core components KMT2A/MLL1, ASH2L, HCFC1/HCF1, WDR5 and RBBP5, as well as the facultative components BACC1, CHD8, E2F6, HSP70, INO80C, KANSL1, LAS1L, MAX, MCRS1, MGA, MYST1/MOF, PELP1, PHF20, PRP31, RING2, RUVB1/TIP49A, RUVB2/TIP49B, SENP3, TAF1, TAF4, TAF6, TAF7, TAF9 and TEX10. Interacts with RYBP, HIP2 and TFCP2. Interacts with NUPR1. Interacts with SAMD7 in a PHC2-dependent manner. In terms of processing, monoubiquitinated, by auto-ubiquitination. Polyubiquitinated in the presence of UBE2D3 (in vitro).

Its subcellular location is the nucleus. The protein resides in the cytoplasm. It localises to the chromosome. The enzyme catalyses S-ubiquitinyl-[E2 ubiquitin-conjugating enzyme]-L-cysteine + [acceptor protein]-L-lysine = [E2 ubiquitin-conjugating enzyme]-L-cysteine + N(6)-ubiquitinyl-[acceptor protein]-L-lysine.. Its pathway is protein modification; protein ubiquitination. E3 ubiquitin-protein ligase that mediates monoubiquitination of 'Lys-119' of histone H2A (H2AK119Ub), thereby playing a central role in histone code and gene regulation. H2AK119Ub gives a specific tag for epigenetic transcriptional repression and participates in X chromosome inactivation of female mammals. May be involved in the initiation of both imprinted and random X inactivation. Essential component of a Polycomb group (PcG) multiprotein PRC1-like complex, a complex class required to maintain the transcriptionally repressive state of many genes, including Hox genes, throughout development. PcG PRC1 complex acts via chromatin remodeling and modification of histones, rendering chromatin heritably changed in its expressibility. E3 ubiquitin-protein ligase activity is enhanced by BMI1/PCGF4. Acts as the main E3 ubiquitin ligase on histone H2A of the PRC1 complex, while RING1 may rather act as a modulator of RNF2/RING2 activity. Plays a role in the transcriptional repression of genes that are required for pluripotency in embryonic stem cells, thereby contributing to differentiation of the ectodermal and endodermal germ layers. Association with the chromosomal DNA is cell-cycle dependent. In resting B- and T-lymphocytes, interaction with AURKB leads to block its activity, thereby maintaining transcription in resting lymphocytes. Also acts as a negative regulator of autophagy by mediating ubiquitination of AMBRA1, leading to its subsequent degradation. This chain is E3 ubiquitin-protein ligase RING2 (Rnf2), found in Rattus norvegicus (Rat).